A 440-amino-acid chain; its full sequence is Virion host shutoff protein (440 aa).

Disordered regions lie at residues 98 to 144 (NIDH…RRKT) and 265 to 312 (IDEP…AGPG). Low complexity predominate over residues 266–281 (DEPPAASEESSASDQQ).

It belongs to the herpesviridae VHS protein family.

It localises to the virion. Its function is as follows. Minor structural protein that acts as an endoribonuclease during lytic infection. Degrades host mRNAs in the cytoplasm by cutting them at preferred sites, including some in regions of translation initiation. This chain is Virion host shutoff protein (UL41), found in Amazona oratrix (yellow-headed parrot).